Consider the following 312-residue polypeptide: uncharacterized protein (312 aa).

Topologically, residues 1–14 (MSIVETCISFVSTN) are extracellular. A helical membrane pass occupies residues 15–35 (PFYPFCTGLLLNCVVTPLYFW). The Cytoplasmic portion of the chain corresponds to 36 to 41 (KTQNGR). The helical transmembrane segment at 42-62 (IVVVSLLQFVVLYATAFISIG) threads the bilayer. Over 63 to 179 (TDKSLYRNKW…LEYDQDTATE (117 aa)) the chain is Extracellular. One can recognise an FAD-binding FR-type domain in the interval 70–173 (NKWVALPLSK…KGPLGELEYD (104 aa)). Residues 180 to 200 (LGIIAGGSGITPVLQVLQEII) form a helical membrane-spanning segment. Over 201–312 (PSPEDLTHIS…GNGTDKVFVF (112 aa)) the chain is Cytoplasmic.

The protein belongs to the flavoprotein pyridine nucleotide cytochrome reductase family. FAD serves as cofactor.

Its subcellular location is the membrane. This is an uncharacterized protein from Saccharomyces cerevisiae (strain ATCC 204508 / S288c) (Baker's yeast).